Here is a 640-residue protein sequence, read N- to C-terminus: Threonine--tRNA ligase (640 aa).

Positions 1-63 constitute a TGS domain; the sequence is MSSVTVTLPD…SEDCEIEIVT (63 aa). The interval 242-533 is catalytic; it reads DHRKLGREMD…LIEHYNGRFP (292 aa). Zn(2+)-binding residues include Cys334, His385, and His510.

This sequence belongs to the class-II aminoacyl-tRNA synthetase family. Homodimer. Zn(2+) is required as a cofactor.

It localises to the cytoplasm. The enzyme catalyses tRNA(Thr) + L-threonine + ATP = L-threonyl-tRNA(Thr) + AMP + diphosphate + H(+). In terms of biological role, catalyzes the attachment of threonine to tRNA(Thr) in a two-step reaction: L-threonine is first activated by ATP to form Thr-AMP and then transferred to the acceptor end of tRNA(Thr). This chain is Threonine--tRNA ligase, found in Halobacterium salinarum (strain ATCC 29341 / DSM 671 / R1).